Consider the following 399-residue polypeptide: Acetate kinase (399 aa).

Mg(2+) is bound at residue N9. K16 is an ATP binding site. Residue R90 coordinates substrate. D147 acts as the Proton donor/acceptor in catalysis. ATP is bound by residues 207–211 (HLGNG), 281–283 (DFR), and 333–337 (GVGEN). E387 contributes to the Mg(2+) binding site.

It belongs to the acetokinase family. As to quaternary structure, homodimer. The cofactor is Mg(2+). It depends on Mn(2+) as a cofactor.

It is found in the cytoplasm. The enzyme catalyses acetate + ATP = acetyl phosphate + ADP. The protein operates within metabolic intermediate biosynthesis; acetyl-CoA biosynthesis; acetyl-CoA from acetate: step 1/2. Catalyzes the formation of acetyl phosphate from acetate and ATP. Can also catalyze the reverse reaction. The protein is Acetate kinase of Mycobacterium sp. (strain JLS).